Consider the following 425-residue polypeptide: Enolase (425 aa).

Q162 lines the (2R)-2-phosphoglycerate pocket. The Proton donor role is filled by E204. 3 residues coordinate Mg(2+): D241, E284, and D311. (2R)-2-phosphoglycerate-binding residues include K336, R365, S366, and K387. K336 functions as the Proton acceptor in the catalytic mechanism.

It belongs to the enolase family. It depends on Mg(2+) as a cofactor.

Its subcellular location is the cytoplasm. The protein resides in the secreted. It localises to the cell surface. The enzyme catalyses (2R)-2-phosphoglycerate = phosphoenolpyruvate + H2O. The protein operates within carbohydrate degradation; glycolysis; pyruvate from D-glyceraldehyde 3-phosphate: step 4/5. Functionally, catalyzes the reversible conversion of 2-phosphoglycerate (2-PG) into phosphoenolpyruvate (PEP). It is essential for the degradation of carbohydrates via glycolysis. The sequence is that of Enolase from Brucella abortus (strain S19).